The primary structure comprises 611 residues: Elongation factor 4 (611 aa).

Residues 11-193 enclose the tr-type G domain; sequence KHIRNFSIVA…KIVKDVPAPT (183 aa). Residues 23–28 and 140–143 contribute to the GTP site; these read DHGKST and NKID.

The protein belongs to the TRAFAC class translation factor GTPase superfamily. Classic translation factor GTPase family. LepA subfamily.

The protein resides in the cell membrane. It catalyses the reaction GTP + H2O = GDP + phosphate + H(+). Required for accurate and efficient protein synthesis under certain stress conditions. May act as a fidelity factor of the translation reaction, by catalyzing a one-codon backward translocation of tRNAs on improperly translocated ribosomes. Back-translocation proceeds from a post-translocation (POST) complex to a pre-translocation (PRE) complex, thus giving elongation factor G a second chance to translocate the tRNAs correctly. Binds to ribosomes in a GTP-dependent manner. This chain is Elongation factor 4, found in Limosilactobacillus reuteri (strain DSM 20016) (Lactobacillus reuteri).